A 403-amino-acid polypeptide reads, in one-letter code: Betaine--homocysteine S-methyltransferase 1 (403 aa).

The region spanning 8–311 (KGLLERLDAG…YHTRAIAEEL (304 aa)) is the Hcy-binding domain. Zn(2+)-binding residues include Cys214, Cys296, and Cys297.

Homotetramer. Requires Zn(2+) as cofactor.

It is found in the cytoplasm. The catalysed reaction is L-homocysteine + glycine betaine = N,N-dimethylglycine + L-methionine. Its pathway is amine and polyamine degradation; betaine degradation; sarcosine from betaine: step 1/2. The protein operates within amino-acid biosynthesis; L-methionine biosynthesis via de novo pathway; L-methionine from L-homocysteine (BhmT route): step 1/1. Functionally, involved in the regulation of homocysteine metabolism. Converts betaine and homocysteine to dimethylglycine and methionine, respectively. This reaction is also required for the irreversible oxidation of choline. The protein is Betaine--homocysteine S-methyltransferase 1 (bhmt) of Xenopus laevis (African clawed frog).